A 125-amino-acid polypeptide reads, in one-letter code: Glycine cleavage system H protein (125 aa).

In terms of domain architecture, Lipoyl-binding spans 19-101 (VGTVGISDYA…EGAAWFFKLT (83 aa)). Lys60 is modified (N6-lipoyllysine).

It belongs to the GcvH family. As to quaternary structure, the glycine cleavage system is composed of four proteins: P, T, L and H. (R)-lipoate serves as cofactor.

The glycine cleavage system catalyzes the degradation of glycine. The H protein shuttles the methylamine group of glycine from the P protein to the T protein. This is Glycine cleavage system H protein from Paramagnetospirillum magneticum (strain ATCC 700264 / AMB-1) (Magnetospirillum magneticum).